The chain runs to 386 residues: Diaminopimelate decarboxylase (386 aa).

K46 carries the N6-(pyridoxal phosphate)lysine modification. Pyridoxal 5'-phosphate-binding positions include G214 and 246–249 (EIGR). Substrate is bound by residues R249, R285, and Y289. C314 (proton donor) is an active-site residue. Residues E315 and Y343 each contribute to the substrate site. Y343 serves as a coordination point for pyridoxal 5'-phosphate.

The protein belongs to the Orn/Lys/Arg decarboxylase class-II family. LysA subfamily. In terms of assembly, homodimer. The cofactor is pyridoxal 5'-phosphate.

It carries out the reaction meso-2,6-diaminopimelate + H(+) = L-lysine + CO2. The protein operates within amino-acid biosynthesis; L-lysine biosynthesis via DAP pathway; L-lysine from DL-2,6-diaminopimelate: step 1/1. Functionally, specifically catalyzes the decarboxylation of meso-diaminopimelate (meso-DAP) to L-lysine. The protein is Diaminopimelate decarboxylase of Thermotoga maritima (strain ATCC 43589 / DSM 3109 / JCM 10099 / NBRC 100826 / MSB8).